The following is a 335-amino-acid chain: Glyceraldehyde-3-phosphate dehydrogenase (335 aa).

NAD(+)-binding positions include 12-13, Asp-34, and Arg-79; that span reads RI. Residues 150–152, Thr-181, 210–211, and Arg-233 contribute to the D-glyceraldehyde 3-phosphate site; these read SCT and TG. Cys-151 functions as the Nucleophile in the catalytic mechanism. Position 315 (Asn-315) interacts with NAD(+).

It belongs to the glyceraldehyde-3-phosphate dehydrogenase family. In terms of assembly, homotetramer.

The protein localises to the cytoplasm. It catalyses the reaction D-glyceraldehyde 3-phosphate + phosphate + NAD(+) = (2R)-3-phospho-glyceroyl phosphate + NADH + H(+). It functions in the pathway carbohydrate degradation; glycolysis; pyruvate from D-glyceraldehyde 3-phosphate: step 1/5. The protein is Glyceraldehyde-3-phosphate dehydrogenase (GPD) of Ogataea parapolymorpha (strain ATCC 26012 / BCRC 20466 / JCM 22074 / NRRL Y-7560 / DL-1) (Yeast).